The following is a 251-amino-acid chain: Probable transcriptional regulatory protein Francci3_1368 (251 aa).

This sequence belongs to the TACO1 family.

The protein resides in the cytoplasm. This Frankia casuarinae (strain DSM 45818 / CECT 9043 / HFP020203 / CcI3) protein is Probable transcriptional regulatory protein Francci3_1368.